Consider the following 342-residue polypeptide: Outer spore wall protein RRT8 (342 aa).

Topologically, residues 1–109 (MKAGIELISH…VLTNPVYWKH (109 aa)) are cytoplasmic. Residues 110 to 130 (ILLFAVCYALIFVTIAGLFYV) form a helical membrane-spanning segment. Thr131 is a topological domain (extracellular). A helical membrane pass occupies residues 132–152 (LVPLLVTWAILLLGPLGVILV). Residues 153–240 (HIQWILQTNV…PRLLFRMFFK (88 aa)) are Cytoplasmic-facing. A helical membrane pass occupies residues 241 to 261 (VSNFTSLTLLSLIPIVGPILA). The Extracellular segment spans residues 262–299 (NQLMAPKRTFTYLQRYFLLKGFSKKQAKDFQYEHYASF). The chain crosses the membrane as a helical span at residues 300–320 (ICFGMSAGLLELIPFFTIVTI). Residues 321–342 (SSNTVGAAKWCTSLLKGERKKE) lie on the Cytoplasmic side of the membrane.

Belongs to the LDS family.

It is found in the prospore membrane. It localises to the lipid droplet. The protein localises to the spore wall. Functionally, involved in spore wall assembly. May be involved in the modulation of rDNA transcription. The chain is Outer spore wall protein RRT8 from Saccharomyces cerevisiae (strain ATCC 204508 / S288c) (Baker's yeast).